The following is a 432-amino-acid chain: Glutamyl-tRNA reductase (432 aa).

Residues 55-58, serine 114, 119-121, and glutamine 125 each bind substrate; these read TCNR and ETQ. Cysteine 56 serves as the catalytic Nucleophile. 194-199 contributes to the NADP(+) binding site; it reads GAGEMI.

The protein belongs to the glutamyl-tRNA reductase family. Homodimer.

It catalyses the reaction (S)-4-amino-5-oxopentanoate + tRNA(Glu) + NADP(+) = L-glutamyl-tRNA(Glu) + NADPH + H(+). It functions in the pathway porphyrin-containing compound metabolism; protoporphyrin-IX biosynthesis; 5-aminolevulinate from L-glutamyl-tRNA(Glu): step 1/2. Functionally, catalyzes the NADPH-dependent reduction of glutamyl-tRNA(Glu) to glutamate 1-semialdehyde (GSA). In Burkholderia pseudomallei (strain 1710b), this protein is Glutamyl-tRNA reductase.